The sequence spans 208 residues: GATA transcription factor 29 (208 aa).

The segment at Gly-155–Asp-208 adopts a GATA-type; atypical zinc-finger fold.

The protein belongs to the type IV zinc-finger family. Class B subfamily.

The protein localises to the nucleus. In terms of biological role, transcriptional regulator that specifically binds 5'-GATA-3' or 5'-GAT-3' motifs within gene promoters. This is GATA transcription factor 29 (GATA29) from Arabidopsis thaliana (Mouse-ear cress).